A 620-amino-acid chain; its full sequence is Glutathione-regulated potassium-efflux system protein KefC (620 aa).

The Periplasmic segment spans residues 1–3; that stretch reads MDS. A helical transmembrane segment spans residues 4–24; the sequence is HTLVQALIYLGSAALIVPIAV. Position 25 (R25) is a topological domain, cytoplasmic. A helical transmembrane segment spans residues 26–46; that stretch reads LGLGSVLGYLIAGCIIGPWGL. The Periplasmic segment spans residues 47–53; that stretch reads RLVTDAE. A helical membrane pass occupies residues 54–74; it reads SILHFAEIGVVLMLFIIGLEL. The Cytoplasmic portion of the chain corresponds to 75–89; the sequence is DPQRLWKLRAAVFGG. The helical transmembrane segment at 90–110 threads the bilayer; sequence GALQMVICGGLLGLFCMLLGL. Topologically, residues 111–113 are periplasmic; that stretch reads RWQ. The chain crosses the membrane as a helical span at residues 114 to 134; it reads VAELIGMTLALSSTAIAMQAM. The Cytoplasmic segment spans residues 135-148; it reads NERNLMVTQMGRSA. The chain crosses the membrane as a helical span at residues 149 to 169; sequence FAVLLFQDIAAIPLVAMIPLL. Residues 170–177 are Periplasmic-facing; that stretch reads AASSASTT. Residues 178-198 traverse the membrane as a helical segment; it reads MGAFALSALKVAGALVLVVLL. Topologically, residues 199–213 are cytoplasmic; sequence GRYVTRPALRFVARS. A helical membrane pass occupies residues 214–233; the sequence is GLREVFSAVALFLVFGFGLL. Over 234–236 the chain is Periplasmic; sequence LEE. A helical transmembrane segment spans residues 237–254; the sequence is VGLSMAMGAFLAGVLLAS. The Cytoplasmic segment spans residues 255–269; sequence SEYRHALESDIEPFK. The helical transmembrane segment at 270 to 290 threads the bilayer; that stretch reads GLLLGLFFIGVGMSIDFGTLI. Over 291–293 the chain is Periplasmic; the sequence is ENP. The helical transmembrane segment at 294–314 threads the bilayer; that stretch reads LRIVILLLGFLIIKIAMLWLI. Topologically, residues 315–326 are cytoplasmic; the sequence is ARPLQVPNKQRR. A helical membrane pass occupies residues 327-347; the sequence is WFAVLLGQGSEFAFVVFGAAQ. At 348–358 the chain is on the periplasmic side; that stretch reads MANVLEPEWAK. A helical transmembrane segment spans residues 359–379; it reads SLTLAVALSMAATPILLVILN. Topologically, residues 380 to 620 are cytoplasmic; the sequence is RLEQSSTEEA…ADEPETKPSS (241 aa). Residues 399–518 form the RCK N-terminal domain; sequence QPRVIIAGFG…AGVEKPERET (120 aa). The interval 597 to 620 is disordered; it reads GWQGTEEGKHTGNMADEPETKPSS.

Belongs to the monovalent cation:proton antiporter 2 (CPA2) transporter (TC 2.A.37) family. KefC subfamily. Homodimer. Interacts with the regulatory subunit KefF.

Its subcellular location is the cell inner membrane. Its function is as follows. Pore-forming subunit of a potassium efflux system that confers protection against electrophiles. Catalyzes K(+)/H(+) antiport. This Escherichia coli O157:H7 protein is Glutathione-regulated potassium-efflux system protein KefC.